A 242-amino-acid polypeptide reads, in one-letter code: Small ribosomal subunit protein uS2 (242 aa).

Belongs to the universal ribosomal protein uS2 family.

This Vibrio vulnificus (strain CMCP6) protein is Small ribosomal subunit protein uS2.